Here is a 361-residue protein sequence, read N- to C-terminus: SUN domain-containing protein 3 (361 aa).

Topologically, residues Met1–Lys47 are nuclear. Residues Glu19–Asp38 are disordered. Residues Ser22–Leu31 are compositionally biased toward low complexity. A helical membrane pass occupies residues Ile48–Leu69. Topologically, residues Lys70 to Ile361 are perinuclear space. The stretch at Lys103–Gln129 forms a coiled coil. In terms of domain architecture, SUN spans Gly197–Gly358.

In terms of assembly, self-associates. Interacts with SYNE1 and SPAG4/SUN4. Proposed to form a spermatogenesis-specific LINC complex with SYNE1 during sperm head formation possibly implicating a SUN domain-based heterotrimer with SPAG4/SUN4 associating with SYNE1.

The protein resides in the membrane. It is found in the nucleus envelope. The protein localises to the nucleus inner membrane. As a probable component of the LINC (LInker of Nucleoskeleton and Cytoskeleton) complex, involved in the connection between the nuclear lamina and the cytoskeleton. The nucleocytoplasmic interactions established by the LINC complex play an important role in the transmission of mechanical forces across the nuclear envelope and in nuclear movement and positioning. May be involved in nuclear remodeling during sperm head formation in spermatogenesis. A probable SUN3:SYNE1 LINC complex may tether spermatid nuclei to posterior cytoskeletal structures such as the manchette. This chain is SUN domain-containing protein 3 (SUN3), found in Macaca fascicularis (Crab-eating macaque).